Reading from the N-terminus, the 89-residue chain is Small ribosomal subunit protein uS17 (89 aa).

The protein belongs to the universal ribosomal protein uS17 family. As to quaternary structure, part of the 30S ribosomal subunit.

Its function is as follows. One of the primary rRNA binding proteins, it binds specifically to the 5'-end of 16S ribosomal RNA. In Novosphingobium aromaticivorans (strain ATCC 700278 / DSM 12444 / CCUG 56034 / CIP 105152 / NBRC 16084 / F199), this protein is Small ribosomal subunit protein uS17.